A 220-amino-acid chain; its full sequence is ATP-dependent Clp protease proteolytic subunit (220 aa).

Catalysis depends on Ser-125, which acts as the Nucleophile. The active site involves His-150.

It belongs to the peptidase S14 family. Fourteen ClpP subunits assemble into 2 heptameric rings which stack back to back to give a disk-like structure with a central cavity, resembling the structure of eukaryotic proteasomes.

The protein resides in the cytoplasm. The enzyme catalyses Hydrolysis of proteins to small peptides in the presence of ATP and magnesium. alpha-casein is the usual test substrate. In the absence of ATP, only oligopeptides shorter than five residues are hydrolyzed (such as succinyl-Leu-Tyr-|-NHMec, and Leu-Tyr-Leu-|-Tyr-Trp, in which cleavage of the -Tyr-|-Leu- and -Tyr-|-Trp bonds also occurs).. Its function is as follows. Cleaves peptides in various proteins in a process that requires ATP hydrolysis. Has a chymotrypsin-like activity. Plays a major role in the degradation of misfolded proteins. The protein is ATP-dependent Clp protease proteolytic subunit of Bacteroides fragilis (strain YCH46).